The primary structure comprises 111 residues: Shuttling pre-60S factor C23B6.02c (111 aa).

Basic residues-rich tracts occupy residues 1-12 and 59-73; these read MAKKQSIRSRNF and SKKKKNKKQTSKKAK. Disordered regions lie at residues 1–25 and 47–111; these read MAKKQSIRSRNFRRSDPAYDLDSST and ALRS…QGDE. The segment covering 83 to 111 has biased composition (basic and acidic residues); that stretch reads QAREERLDTKISKSLQKQEKLKARKQGDE.

It belongs to the ECM1 family. As to quaternary structure, associates with the pre-60S ribosomal particle and the nucleopore complex.

The protein localises to the nucleus. It localises to the nucleolus. It is found in the cytoplasm. Its function is as follows. Pre-ribosomal factor involved in 60S ribosomal protein subunit export from the nucleus. The chain is Shuttling pre-60S factor C23B6.02c from Schizosaccharomyces pombe (strain 972 / ATCC 24843) (Fission yeast).